A 510-amino-acid chain; its full sequence is tRNA-2-methylthio-N(6)-dimethylallyladenosine synthase (510 aa).

In terms of domain architecture, MTTase N-terminal spans 19-144 (RTYQVRTFGC…LPVLLERARH (126 aa)). 6 residues coordinate [4Fe-4S] cluster: Cys-28, Cys-73, Cys-107, Cys-181, Cys-185, and Cys-188. The Radical SAM core domain maps to 167 to 397 (RESPYAAWVS…TALQDRITYE (231 aa)). The TRAM domain maps to 400 to 470 (QAQTGRTLEV…PHYLEADDVS (71 aa)). Basic and acidic residues predominate over residues 482-492 (AWEARQARPEP). Residues 482 to 510 (AWEARQARPEPESTGPRPVGLGLPTLRRA) are disordered.

Belongs to the methylthiotransferase family. MiaB subfamily. Monomer. [4Fe-4S] cluster is required as a cofactor.

The protein localises to the cytoplasm. It carries out the reaction N(6)-dimethylallyladenosine(37) in tRNA + (sulfur carrier)-SH + AH2 + 2 S-adenosyl-L-methionine = 2-methylsulfanyl-N(6)-dimethylallyladenosine(37) in tRNA + (sulfur carrier)-H + 5'-deoxyadenosine + L-methionine + A + S-adenosyl-L-homocysteine + 2 H(+). In terms of biological role, catalyzes the methylthiolation of N6-(dimethylallyl)adenosine (i(6)A), leading to the formation of 2-methylthio-N6-(dimethylallyl)adenosine (ms(2)i(6)A) at position 37 in tRNAs that read codons beginning with uridine. The polypeptide is tRNA-2-methylthio-N(6)-dimethylallyladenosine synthase (Kineococcus radiotolerans (strain ATCC BAA-149 / DSM 14245 / SRS30216)).